A 319-amino-acid chain; its full sequence is HPr kinase/phosphorylase (319 aa).

Catalysis depends on residues His-141 and Lys-162. 156–163 (GNSGVGKS) contributes to the ATP binding site. Ser-163 provides a ligand contact to Mg(2+). Residue Asp-180 is the Proton acceptor; for phosphorylation activity. Proton donor; for dephosphorylation activity of the active site. The tract at residues 204-213 (MEIRGIGIID) is important for the catalytic mechanism of both phosphorylation and dephosphorylation. Residue Glu-205 participates in Mg(2+) binding. Arg-246 is an active-site residue. The tract at residues 267-272 (PVKVGR) is important for the catalytic mechanism of dephosphorylation.

It belongs to the HPrK/P family. In terms of assembly, homohexamer. It depends on Mg(2+) as a cofactor.

The catalysed reaction is [HPr protein]-L-serine + ATP = [HPr protein]-O-phospho-L-serine + ADP + H(+). It catalyses the reaction [HPr protein]-O-phospho-L-serine + phosphate + H(+) = [HPr protein]-L-serine + diphosphate. In terms of biological role, catalyzes the ATP- as well as the pyrophosphate-dependent phosphorylation of a specific serine residue in HPr, a phosphocarrier protein of the phosphoenolpyruvate-dependent sugar phosphotransferase system (PTS). HprK/P also catalyzes the pyrophosphate-producing, inorganic phosphate-dependent dephosphorylation (phosphorolysis) of seryl-phosphorylated HPr (P-Ser-HPr). The two antagonistic activities of HprK/P are regulated by several intracellular metabolites, which change their concentration in response to the absence or presence of rapidly metabolisable carbon sources (glucose, fructose, etc.) in the growth medium. Therefore, by controlling the phosphorylation state of HPr, HPrK/P is a sensor enzyme that plays a major role in the regulation of carbon metabolism and sugar transport: it mediates carbon catabolite repression (CCR), and regulates PTS-catalyzed carbohydrate uptake and inducer exclusion. The polypeptide is HPr kinase/phosphorylase (Lactobacillus johnsonii (strain CNCM I-12250 / La1 / NCC 533)).